A 167-amino-acid chain; its full sequence is MERFVVTAPPARNRSKTALYVTPLDRVTEFGGELHEDGGKLFCTSCNVVLNHVRKSAISDHLKSKTHTKRKAEFEEQNVRKKQRPLTASLQCNSTAQTEKVSVIQDFVKMCLEANIPLEKADHPAVRAFLSRHVKNGGSIPKSDQLRRAYLPDGYENENQLLNSQDC.

S56 bears the Phosphoserine mark. Positions R80–R84 match the Nuclear localization signal motif. At S164 the chain carries Phosphoserine.

In terms of tissue distribution, ubiquitous. Highly expressed in placenta, thymus, lymph nodes, cerebellum and cerebral cortex. Low expression in other regions of the brain.

It is found in the nucleus. Functionally, binds to nonmethylated 5'-d(CGG)(n)-3' trinucleotide repeats in the FMR1 promoter. May play a role in regulating FMR1 promoter. The chain is CGG triplet repeat-binding protein 1 (CGGBP1) from Homo sapiens (Human).